We begin with the raw amino-acid sequence, 383 residues long: 1-deoxy-D-xylulose 5-phosphate reductoisomerase (383 aa).

Thr-10, Gly-11, Ser-12, Ile-13, Gly-36, Arg-37, Asn-38, and Asn-122 together coordinate NADPH. Lys-123 contacts 1-deoxy-D-xylulose 5-phosphate. An NADPH-binding site is contributed by Glu-124. Residue Asp-148 participates in Mn(2+) binding. 1-deoxy-D-xylulose 5-phosphate contacts are provided by Ser-149, Glu-150, Ser-174, and His-197. Glu-150 contributes to the Mn(2+) binding site. An NADPH-binding site is contributed by Gly-203. 1-deoxy-D-xylulose 5-phosphate contacts are provided by Ser-210, Asn-215, Lys-216, and Glu-219. Residue Glu-219 coordinates Mn(2+).

Belongs to the DXR family. The cofactor is Mg(2+). It depends on Mn(2+) as a cofactor.

It carries out the reaction 2-C-methyl-D-erythritol 4-phosphate + NADP(+) = 1-deoxy-D-xylulose 5-phosphate + NADPH + H(+). It functions in the pathway isoprenoid biosynthesis; isopentenyl diphosphate biosynthesis via DXP pathway; isopentenyl diphosphate from 1-deoxy-D-xylulose 5-phosphate: step 1/6. Its function is as follows. Catalyzes the NADPH-dependent rearrangement and reduction of 1-deoxy-D-xylulose-5-phosphate (DXP) to 2-C-methyl-D-erythritol 4-phosphate (MEP). This Bacillus subtilis (strain 168) protein is 1-deoxy-D-xylulose 5-phosphate reductoisomerase.